A 315-amino-acid polypeptide reads, in one-letter code: Eukaryotic translation initiation factor 2 subunit 1 (315 aa).

Residues Glu-17 to Arg-88 enclose the S1 motif domain. Residue Ser-49 is modified to Phosphoserine; by HRI. Phosphoserine is present on Ser-52. Lys-141 bears the N6-acetyllysine mark. Position 158 is a phosphoserine (Ser-158). A phosphothreonine mark is found at Thr-279 and Thr-281. The tract at residues Leu-293–Asp-315 is disordered. A compositionally biased stretch (acidic residues) spans Glu-299–Glu-308.

The protein belongs to the eIF-2-alpha family. In terms of assembly, eukaryotic translation initiation factor 2 eIF2 is a heterotrimeric complex composed of an alpha (EIF2S1), a beta (EIF2S2) and a gamma (EIF2S3) chain. eIF2 is member of the 43S pre-initiation complex (43S PIC). eIF2 forms a complex with at least CELF1/CUGBP1, CALR, CALR3, EIF2S1, EIF2S2, HSP90B1 and HSPA5. Interaction with METAP2 protects EIF2S1 from inhibitory phosphorylation. Interacts with ABCF1 isoform 2. Associates with ribosomes. Interacts with DDX3X in an RNA-independent manner. Interacts with CDC123. (Microbial infection) Interacts with rotavirus A non-structural protein 2; this interaction probably plays a role in the sequestration of IF2A in viral factories. Interacts with rotavirus A non-structural protein 5; this interaction probably plays a role in its sequestration in viral factories. Phosphorylation at Ser-49 and Ser-52 stabilizes the eIF-2/GDP/eIF2B complex and prevents GDP/GTP exchange reaction, thus impairing the recycling of eIF-2 between successive rounds of initiation and leading to global inhibition of translation, while concomitantly initiating the preferential translation of integrated stress response (ISR)-specific mRNAs. Substrate for at least 4 kinases: EIF2AK1/HRI, EIF2AK2/PKR, EIF2AK3/PERK and EIF2AK4/GCN2. Phosphorylation on Ser-52 by the EIF2AK4/GCN2 protein kinase occurs in response to amino acid starvation and UV irradiation. Phosphorylation at Ser-52 by the EIF2AK3/PERK protein kinase occurs in response to the unfolded protein response. Phosphorylation at Ser-52 by EIF2AK1/HRI in response to mitochondrial damage promotes relocalization to the mitochondrial surface. In terms of processing, (Microbial infection) Phosphorylation by vaccinia virus protein E3 and rotavirus A stabilizes the eIF-2/GDP/eIF2B complex and prevents GDP/GTP exchange reaction, thus impairing the recycling of eIF-2 between successive rounds of initiation and leading to global inhibition of translation.

The protein localises to the cytoplasm. It is found in the stress granule. The protein resides in the cytosol. Its subcellular location is the mitochondrion. With respect to regulation, activity is regulated by phosphorylation at Ser-49 and Ser-52, which stabilizes the eIF2/GDP/eIF2B complex and prevents the eIF2B-mediated exchange of GDP for GTP, thereby preventing the formation of the 43S pre-initiation complex (43S PIC). This results in the global attenuation of 5' cap-dependent protein synthesis and concomitant translation of ISR-specific mRNAs that contain a short upstream open reading frame (uORF) in their 5' UTR, such as ATF4, ATF5, DDIT3/CHOP and PPP1R15A/GADD34. Its function is as follows. Member of the eIF2 complex that functions in the early steps of protein synthesis by forming a ternary complex with GTP and initiator tRNA. This complex binds to a 40S ribosomal subunit, followed by mRNA binding to form a 43S pre-initiation complex (43S PIC). Junction of the 60S ribosomal subunit to form the 80S initiation complex is preceded by hydrolysis of the GTP bound to eIF2 and release of an eIF2-GDP binary complex. In order for eIF2 to recycle and catalyze another round of initiation, the GDP bound to eIF2 must exchange with GTP by way of a reaction catalyzed by eIF2B. EIF2S1/eIF2-alpha is a key component of the integrated stress response (ISR), required for adaptation to various stress: phosphorylation by metabolic-stress sensing protein kinases (EIF2AK1/HRI, EIF2AK2/PKR, EIF2AK3/PERK and EIF2AK4/GCN2) in response to stress converts EIF2S1/eIF2-alpha in a global protein synthesis inhibitor, leading to an attenuation of cap-dependent translation, while concomitantly initiating the preferential translation of ISR-specific mRNAs, such as the transcriptional activators ATF4 and QRICH1, and hence allowing ATF4- and QRICH1-mediated reprogramming. EIF2S1/eIF2-alpha also acts as an activator of mitophagy in response to mitochondrial damage: phosphorylation by EIF2AK1/HRI promotes relocalization to the mitochondrial surface, thereby triggering PRKN-independent mitophagy. In Homo sapiens (Human), this protein is Eukaryotic translation initiation factor 2 subunit 1.